A 472-amino-acid chain; its full sequence is uncharacterized protein (472 aa).

6 helical membrane passes run 4–24 (IIILLALGLLMFTAYRGFSVI), 27–47 (APICALFAVLLTDPSHVLPFF), 56–76 (AGFIKLYFPVFLLGAIFGKVV), 99–119 (ILAIVLMGAVLTYSGVSLFVV), 140–160 (LIPGTIALGAFTFTMDALPGT), and 176–196 (IYAAPWLGLMGAVIVLAAGML). The interval 209–229 (GEGYGGFDSQNAPAPESIESA) is disordered. Low complexity predominate over residues 220–229 (APAPESIESA). 5 helical membrane passes run 240–260 (ALAFVPLILVGAVNKYFTIYL), 286–306 (AAAIWSVEIALVIGIITTILF), 323–343 (IGGALLASMNTGAEYGFGGII), 372–392 (TALAGITGSASGGMGIALSAM), and 448–468 (IFAITLIKTAAVFAVIAIYSL).

Belongs to the CitM (TC 2.A.11) transporter family.

Its subcellular location is the cell membrane. This is an uncharacterized protein from Bacillus subtilis (strain 168).